The sequence spans 163 residues: Nucleotide-binding protein BCG9842_B4128 (163 aa).

This sequence belongs to the YajQ family.

Nucleotide-binding protein. This Bacillus cereus (strain G9842) protein is Nucleotide-binding protein BCG9842_B4128.